Consider the following 1229-residue polypeptide: Membrane-anchored lipid-binding protein SIP3 (1229 aa).

Over 1–1066 (MSVHGRDPKK…AEKFSRINRM (1066 aa)) the chain is Cytoplasmic. Residues 309 to 423 (SPEKSGWLYM…WLIAFEATKK (115 aa)) form the PH domain. A VASt domain is found at 771 to 976 (EYSITYNHEY…VLRYYLEKIG (206 aa)). A helical transmembrane segment spans residues 1067–1087 (MVVGLLASIMINILLSEKASV). The Lumenal portion of the chain corresponds to 1088 to 1229 (PYWSIKRAEK…ELEKLRPPIT (142 aa)). The N-linked (GlcNAc...) asparagine glycan is linked to asparagine 1206.

The protein belongs to the SIP3 family. As to quaternary structure, interacts with SNF1.

The protein localises to the endoplasmic reticulum membrane. In terms of biological role, may be involved in sterol transfer between intracellular membranes. In Saccharomyces cerevisiae (strain ATCC 204508 / S288c) (Baker's yeast), this protein is Membrane-anchored lipid-binding protein SIP3.